The chain runs to 422 residues: UDP-N-acetylglucosamine 1-carboxyvinyltransferase (422 aa).

Lys22–Asn23 contacts phosphoenolpyruvate. Arg93 lines the UDP-N-acetyl-alpha-D-glucosamine pocket. Cys117 (proton donor) is an active-site residue. At Cys117 the chain carries 2-(S-cysteinyl)pyruvic acid O-phosphothioketal. UDP-N-acetyl-alpha-D-glucosamine contacts are provided by residues Arg122 to Gln126, Asp305, and Ile327.

This sequence belongs to the EPSP synthase family. MurA subfamily.

The protein localises to the cytoplasm. It catalyses the reaction phosphoenolpyruvate + UDP-N-acetyl-alpha-D-glucosamine = UDP-N-acetyl-3-O-(1-carboxyvinyl)-alpha-D-glucosamine + phosphate. It participates in cell wall biogenesis; peptidoglycan biosynthesis. In terms of biological role, cell wall formation. Adds enolpyruvyl to UDP-N-acetylglucosamine. The chain is UDP-N-acetylglucosamine 1-carboxyvinyltransferase from Bordetella petrii (strain ATCC BAA-461 / DSM 12804 / CCUG 43448).